Reading from the N-terminus, the 143-residue chain is UPF0292 protein Mbar_A0484 (143 aa).

Positions 28–109 constitute a Toprim domain; sequence GAIIIVEGKR…KPELEIRNKL (82 aa). The Mg(2+) site is built by Glu34, Asp78, and Asp80.

Belongs to the UPF0292 family. The cofactor is Mg(2+).

This Methanosarcina barkeri (strain Fusaro / DSM 804) protein is UPF0292 protein Mbar_A0484.